The following is a 312-amino-acid chain: 3-methyl-2-oxobutanoate hydroxymethyltransferase (312 aa).

This sequence belongs to the PanB family.

It catalyses the reaction 3-methyl-2-oxobutanoate + (6R)-5,10-methylene-5,6,7,8-tetrahydrofolate + H2O = 2-dehydropantoate + (6S)-5,6,7,8-tetrahydrofolate. It participates in cofactor biosynthesis; (R)-pantothenate biosynthesis; (R)-pantoate from 3-methyl-2-oxobutanoate: step 1/2. In terms of biological role, probable 3-methyl-2-oxobutanoate hydroxymethyltransferase required for pantothenic acid biosynthesis. Acts downstream in the pantothenic acid pathway. This Saccharomyces cerevisiae (strain ATCC 204508 / S288c) (Baker's yeast) protein is 3-methyl-2-oxobutanoate hydroxymethyltransferase.